The chain runs to 161 residues: ATP synthase subunit b (161 aa).

The helical transmembrane segment at 12-32 (IAFFLFVFFCMKYIWPNLISL) threads the bilayer.

This sequence belongs to the ATPase B chain family. F-type ATPases have 2 components, F(1) - the catalytic core - and F(0) - the membrane proton channel. F(1) has five subunits: alpha(3), beta(3), gamma(1), delta(1), epsilon(1). F(0) has three main subunits: a(1), b(2) and c(10-14). The alpha and beta chains form an alternating ring which encloses part of the gamma chain. F(1) is attached to F(0) by a central stalk formed by the gamma and epsilon chains, while a peripheral stalk is formed by the delta and b chains.

It is found in the cell membrane. Functionally, f(1)F(0) ATP synthase produces ATP from ADP in the presence of a proton or sodium gradient. F-type ATPases consist of two structural domains, F(1) containing the extramembraneous catalytic core and F(0) containing the membrane proton channel, linked together by a central stalk and a peripheral stalk. During catalysis, ATP synthesis in the catalytic domain of F(1) is coupled via a rotary mechanism of the central stalk subunits to proton translocation. Its function is as follows. Component of the F(0) channel, it forms part of the peripheral stalk, linking F(1) to F(0). This is ATP synthase subunit b from Wigglesworthia glossinidia brevipalpis.